A 274-amino-acid chain; its full sequence is SWI/SNF chromatin-remodeling complex subunit snf30 (274 aa).

2 stretches are compositionally biased toward polar residues: residues 123-150 (TLSYPPSNGDSSSYANGTDLHGNTGTMQ) and 157-167 (PSLTRSDSVSS). A disordered region spans residues 123 to 167 (TLSYPPSNGDSSSYANGTDLHGNTGTMQQEEKANPSLTRSDSVSS).

Component of the SWI/SNF global transcription activator complex composed of at least arp9, arp42, snf5, snf22, snf30, sbf59, sol1, ssr1, ssr2, ssr3, ssr4 and tfg3.

It localises to the cytoplasm. The protein localises to the nucleus. In terms of biological role, component of the SWI/SNF complex, an ATP-dependent chromatin remodeling complex, required for the positive and negative regulation of gene expression of a large number of genes. It changes chromatin structure by altering DNA-histone contacts within a nucleosome, leading eventually to a change in nucleosome position, thus facilitating or repressing binding of gene-specific transcription factors. This Schizosaccharomyces pombe (strain 972 / ATCC 24843) (Fission yeast) protein is SWI/SNF chromatin-remodeling complex subunit snf30 (snf30).